Reading from the N-terminus, the 140-residue chain is Histone H2B (140 aa).

A compositionally biased stretch (basic and acidic residues) spans 1–10 (MPPKAAEKKP). Residues 1-48 (MPPKAAEKKPSTGGKAPAGKAPAEKKEAGKKTAAAATGDKKKRGKTRK) form a disordered region. N6-acetyllysine; alternate occurs at positions 8 and 9. Glycyl lysine isopeptide (Lys-Gly) (interchain with G-Cter in SUMO); alternate cross-links involve residues lysine 8 and lysine 9. A compositionally biased stretch (low complexity) spans 11-21 (STGGKAPAGKA). Position 15 is an N6-acetyllysine (lysine 15). Residue lysine 25 is modified to N6-acetyllysine; alternate. Lysine 25 is covalently cross-linked (Glycyl lysine isopeptide (Lys-Gly) (interchain with G-Cter in SUMO); alternate). Residue lysine 26 forms a Glycyl lysine isopeptide (Lys-Gly) (interchain with G-Cter in SUMO) linkage. Residue lysine 134 forms a Glycyl lysine isopeptide (Lys-Gly) (interchain with G-Cter in ubiquitin) linkage.

This sequence belongs to the histone H2B family. The nucleosome is a histone octamer containing two molecules each of H2A, H2B, H3 and H4 assembled in one H3-H4 heterotetramer and two H2A-H2B heterodimers. The octamer wraps approximately 147 bp of DNA. In terms of processing, monoubiquitinated by the ubc2-bre1 complex to form H2BK123ub1. H2BK123ub1 gives a specific tag for epigenetic transcriptional activation and is also prerequisite for H3K4me and H3K79me formation. H2BK123ub1 also modulates the formation of double-strand breaks during meiosis and is a prerequisite for DNA-damage checkpoint activation. Post-translationally, acetylated by gcn5 to form H2BK11ac and H2BK16ac. H2BK16ac can also be formed by esa1. Acetylation of N-terminal lysines and particularly formation of H2BK11acK16ac has a positive effect on transcription. Sumoylation to form H2BK6su or H2BK7su, and probably also H2BK16su or H2BK17su, occurs preferentially near the telomeres and represses gene transcription.

Its subcellular location is the nucleus. It is found in the chromosome. In terms of biological role, core component of nucleosome. Nucleosomes wrap and compact DNA into chromatin, limiting DNA accessibility to the cellular machineries which require DNA as a template. Histones thereby play a central role in transcription regulation, DNA repair, DNA replication and chromosomal stability. DNA accessibility is regulated via a complex set of post-translational modifications of histones, also called histone code, and nucleosome remodeling. This chain is Histone H2B (htb1), found in Neosartorya fischeri (strain ATCC 1020 / DSM 3700 / CBS 544.65 / FGSC A1164 / JCM 1740 / NRRL 181 / WB 181) (Aspergillus fischerianus).